A 201-amino-acid chain; its full sequence is uncharacterized protein (201 aa).

One can recognise a Bro-N domain in the interval 15 to 122; sequence KNQIQFSTFN…EVLPQIRKTG (108 aa).

This is an uncharacterized protein from Haemophilus influenzae (strain ATCC 51907 / DSM 11121 / KW20 / Rd).